Here is a 479-residue protein sequence, read N- to C-terminus: RAC-gamma serine/threonine-protein kinase (479 aa).

N-acetylserine is present on Ser2. The region spanning 5-107 is the PH domain; that stretch reads TIVKEGWVQK…WTEAIQAVAD (103 aa). Residues Cys59 and Cys76 are joined by a disulfide bond. The region spanning 148–405 is the Protein kinase domain; it reads FDYLKLLGKG…AKEIMRHSFF (258 aa). ATP-binding positions include 154–162 and Lys177; that span reads LGKGTFGKV. The active-site Proton acceptor is the Asp271. A disulfide bond links Cys293 and Cys307. A glycan (O-linked (GlcNAc) threonine) is linked at Thr302. Thr305 bears the Phosphothreonine; by PDPK1 mark. An O-linked (GlcNAc) threonine glycan is attached at Thr309. Residues 406-479 form the AGC-kinase C-terminal domain; sequence SGVNWQDVYD…QFSYSASGRE (74 aa). The segment at 445–479 is disordered; that stretch reads TITPPEKYDDDGMDGMDNERRPHFPQFSYSASGRE. Position 447 is a phosphothreonine (Thr447). Ser472 bears the Phosphoserine; by PKC/PRKCZ mark. A glycan (O-linked (GlcNAc) serine; alternate) is linked at Ser472.

It belongs to the protein kinase superfamily. AGC Ser/Thr protein kinase family. RAC subfamily. In terms of assembly, interacts (via PH domain) with TCL1A; this enhances AKT3 phosphorylation and activation. Interacts with TRAF6. Interacts with KCTD20. Interacts with BTBD10. Phosphorylation on Thr-305 and Ser-472 is required for full activity. Phosphorylation of the activation loop at Thr-305 by PDPK1/PDK1 is a prerequisite for full activation. Phosphorylation at Ser-472 by mTORC2 in response to growth factors plays a key role in AKT1 activation by facilitating subsequent phosphorylation of the activation loop by PDPK1/PDK1. Post-translationally, ubiquitinated. When fully phosphorylated and translocated into the nucleus, undergoes 'Lys-48'-polyubiquitination catalyzed by TTC3, leading to its degradation by the proteasome. In terms of processing, O-GlcNAcylation at Thr-302 and Thr-309 inhibits activating phosphorylation at Thr-305 via disrupting the interaction between AKT and PDPK1/PDK1. As to expression, isoform 1 is expressed in prostate, testis, uterus and mammary gland and isoform 2 is expressed in prostate, testis and mammary gland.

The protein resides in the nucleus. Its subcellular location is the cytoplasm. It is found in the membrane. The catalysed reaction is L-seryl-[protein] + ATP = O-phospho-L-seryl-[protein] + ADP + H(+). It catalyses the reaction L-threonyl-[protein] + ATP = O-phospho-L-threonyl-[protein] + ADP + H(+). With respect to regulation, two specific sites, one in the kinase domain (Thr-305) and the other in the C-terminal regulatory region (Ser-472), need to be phosphorylated for its full activation. IGF-1 leads to the activation of AKT3, which may play a role in regulating cell survival. Functionally, AKT3 is one of 3 closely related serine/threonine-protein kinases (AKT1, AKT2 and AKT3) called the AKT kinase, and which regulate many processes including metabolism, proliferation, cell survival, growth and angiogenesis. This is mediated through serine and/or threonine phosphorylation of a range of downstream substrates. Over 100 substrate candidates have been reported so far, but for most of them, no isoform specificity has been reported. AKT3 is the least studied AKT isoform. It plays an important role in brain development and is crucial for the viability of malignant glioma cells. AKT3 isoform may also be the key molecule in up-regulation and down-regulation of MMP13 via IL13. Required for the coordination of mitochondrial biogenesis with growth factor-induced increases in cellular energy demands. Down-regulation by RNA interference reduces the expression of the phosphorylated form of BAD, resulting in the induction of caspase-dependent apoptosis. In Mus musculus (Mouse), this protein is RAC-gamma serine/threonine-protein kinase (Akt3).